The chain runs to 394 residues: Xylose isomerase (394 aa).

Active-site residues include His54 and Asp57. Mg(2+) is bound by residues Glu181, Glu217, His220, Asp245, Asp255, Asp257, and Asp292.

Belongs to the xylose isomerase family. As to quaternary structure, homotetramer. It depends on Mg(2+) as a cofactor.

The protein resides in the cytoplasm. It catalyses the reaction alpha-D-xylose = alpha-D-xylulofuranose. This is Xylose isomerase (xylA) from Actinoplanes missouriensis (strain ATCC 14538 / DSM 43046 / CBS 188.64 / JCM 3121 / NBRC 102363 / NCIMB 12654 / NRRL B-3342 / UNCC 431).